The following is a 169-amino-acid chain: Nucleoside diphosphate kinase 3 (169 aa).

Positions 29, 105, 111, 122, 129, and 132 each coordinate ADP. The active-site Pros-phosphohistidine intermediate is the H135.

It belongs to the NDK family. In terms of assembly, homohexamer. Interacts (via its N-terminal region) with KAT5; this interaction enables recruitment of NME3 at DNA damage sites where it plays a role in the repair of DNA. Found in association with several ciliary nephronophthisis proteins, including NEK8, CEP164, ANKS6. The cofactor is Mg(2+).

It localises to the mitochondrion outer membrane. The protein localises to the cytoplasm. It is found in the cytoskeleton. The protein resides in the cilium basal body. The catalysed reaction is a 2'-deoxyribonucleoside 5'-diphosphate + ATP = a 2'-deoxyribonucleoside 5'-triphosphate + ADP. The enzyme catalyses a ribonucleoside 5'-diphosphate + ATP = a ribonucleoside 5'-triphosphate + ADP. Catalyzes the phosphorylation of ribonucleosides and deoxyribonucleoside diphosphates, other than ATP, into the corresponding triphosphates with ATP as the major phosphate donor. The ATP gamma phosphate is transferred to the nucleoside diphosphate beta phosphate via a ping-pong mechanism, using a phosphorylated active-site intermediate. Through the catalyzed exchange of gamma-phosphate between di- and triphosphonucleosides participates in regulation of intracellular nucleotide homeostasis. Inhibits granulocyte differentiation. May be required for ciliary function during renal development. Functionally, independently of its kinase activity, facilitates mitochondrial tethering prior to membrane fusion through its direct membrane-binding and hexamerization. Implicated in repair of both single- and double-stranded breaks in DNA through its association with the ribonucleotide reductase complex (RNR complex) via its interaction with the histone acetyltransferase KAT5, this interaction enables recruitment of NME3 at DNA damage sites where it plays a role in the repair of DNA, independently of its kinase activity. The polypeptide is Nucleoside diphosphate kinase 3 (Nme3) (Mus musculus (Mouse)).